The sequence spans 499 residues: Phenylalanine--tRNA ligase alpha subunit (499 aa).

Residues threonine 342, 381–383, and phenylalanine 422 each bind L-phenylalanine; that span reads QID. Residue glutamate 424 coordinates Mg(2+). Phenylalanine 447 contacts L-phenylalanine.

It belongs to the class-II aminoacyl-tRNA synthetase family. Phe-tRNA synthetase alpha subunit type 2 subfamily. As to quaternary structure, tetramer of two alpha and two beta subunits. Requires Mg(2+) as cofactor.

The protein resides in the cytoplasm. It catalyses the reaction tRNA(Phe) + L-phenylalanine + ATP = L-phenylalanyl-tRNA(Phe) + AMP + diphosphate + H(+). This chain is Phenylalanine--tRNA ligase alpha subunit, found in Pyrococcus furiosus (strain ATCC 43587 / DSM 3638 / JCM 8422 / Vc1).